Here is a 643-residue protein sequence, read N- to C-terminus: Methyl-accepting chemotaxis protein McpA (643 aa).

A helical membrane pass occupies residues 24 to 44 (ILLSACGVVVLAFALFTLYND). Residues 49–273 (NTIRQNIEAS…GLPSAQWYIG (225 aa)) enclose the Cache domain. Residues 293–313 (IIAMLIAVAAIAGLLGLLIPV) form a helical membrane-spanning segment. The 55-residue stretch at 312–366 (PVLMSPLTTMGRAMRDIAEGEGDLTRRLAVQNKDEFGELATSFNRFVERIHASIS) folds into the HAMP domain. Residues 371–607 (ATRLVHDLSE…SLNLDITQIN (237 aa)) form the Methyl-accepting transducer domain.

The protein belongs to the methyl-accepting chemotaxis (MCP) protein family.

It is found in the cell membrane. In terms of biological role, chemotactic-signal transducers respond to changes in the concentration of attractants and repellents in the environment, transduce a signal from the outside to the inside of the cell, and facilitate sensory adaptation through the variation of the level of methylation. McpA is a chemoreceptor that binds to 12 different L-amino acids and mediates chemotaxis toward these amino acids. The protein is Methyl-accepting chemotaxis protein McpA of Pseudomonas putida (strain ATCC 47054 / DSM 6125 / CFBP 8728 / NCIMB 11950 / KT2440).